The following is a 102-amino-acid chain: MSNTTVPNAPQANSDSMVGYVLGPFFLITLVGVVVAVVMYVQKKKRVDRLRHHLLPMYSYDPAEELHEAEQELLSDMGDPKVVHGWQSGYQHKRMPLLDVKT.

An N-linked (GlcNAc...) asparagine glycan is attached at asparagine 3. The chain crosses the membrane as a helical span at residues 21-41 (VLGPFFLITLVGVVVAVVMYV).

As to expression, expressed in spleen, thymus, prostate, testis, uterus, small intestine, colon and peripheral blood leukocytes.

Its subcellular location is the membrane. The protein is Small integral membrane protein 29 of Homo sapiens (Human).